A 616-amino-acid polypeptide reads, in one-letter code: DNA-binding protein RFX5 (616 aa).

Residues 1–29 (MAEDEPDAKSPKTGGRAPPGGAEAGEPTT) are disordered. Residue Ala2 is modified to N-acetylalanine. Ser10 carries the phosphoserine modification. A compositionally biased stretch (low complexity) spans 13-29 (TGGRAPPGGAEAGEPTT). Residues 25-90 (GEPTTLLQRL…PSTLSNEEYM (66 aa)) form an N-terminal domain region. Residues 62-66 (LYLYL) form a leucine-rich region; critical for dimer formation and for interaction with RFXAP region. Positions 92-168 (AYRWIRNHLE…YCYSGIRRKT (77 aa)) form a DNA-binding region, RFX-type winged-helix. Residues 173–178 (PPLPGL) carry the PxLPxI/L motif; mediates interaction with RFXANK motif. Ser185 carries the phosphoserine modification. Disordered regions lie at residues 252–314 (AEED…ESSA) and 391–616 (LPGP…ATPP). Residues 276 to 293 (GAHKKPERLAQPPKDLEA) show a composition bias toward basic and acidic residues. Pro residues predominate over residues 391-401 (LPGPGPGPGRA). Positions 424-434 (GPHDKGVKRTA) are enriched in basic and acidic residues. Positions 463–473 (KRKRGRPRKKS) are enriched in basic residues. The span at 534-546 (QGDGTVSKGGRGP) shows a compositional bias: gly residues. Residues 606–616 (QEHKDPKATPP) show a composition bias toward basic and acidic residues.

It belongs to the RFX family. As to quaternary structure, homodimer. The RFX heterotetrameric complex consists of 2 molecules of RFX5 and one each of RFXAP and RFX-B/RFXANK; with each subunit representing a separate complementation group. Interacts (via PxLPxI/L motif) with RFXANK (via ankyrin repeats); the interaction is direct. RFX forms cooperative DNA binding complexes with X2BP and CBF/NF-Y. RFX associates with CIITA to form an active transcriptional complex. Phosphorylated. In terms of tissue distribution, ubiquitous.

It localises to the nucleus. Its function is as follows. Activates transcription from class II MHC promoters. Recognizes X-boxes. Mediates cooperative binding between RFX and NF-Y. RFX binds the X1 box of MHC-II promoters. In Homo sapiens (Human), this protein is DNA-binding protein RFX5 (RFX5).